Consider the following 341-residue polypeptide: Terpene synthase 9 (341 aa).

The DDxx(x)D/E motif signature appears at 81 to 86 (DDILDS). The short motif at 222-230 (NDMASYCKE) is the NDxxSxxxD/E motif element.

This sequence belongs to the terpene synthase family.

The catalysed reaction is (2E,6E)-farnesyl diphosphate = (1S,2S,4R)-beta-elemene + diphosphate. It carries out the reaction (2E,6E)-farnesyl diphosphate = germacrene D + diphosphate. Its function is as follows. Terpene synthase that converts its substrate farnesyl diphosphate (FPP) into the sesquiterpenes beta-elemene, germacrene D and a yet unidentified sesquiterpene. This chain is Terpene synthase 9, found in Dictyostelium purpureum (Slime mold).